The primary structure comprises 364 residues: DNA replication and repair protein RecF (364 aa).

30-37 is an ATP binding site; sequence GNNAQGKT.

It belongs to the RecF family.

It localises to the cytoplasm. The RecF protein is involved in DNA metabolism; it is required for DNA replication and normal SOS inducibility. RecF binds preferentially to single-stranded, linear DNA. It also seems to bind ATP. This is DNA replication and repair protein RecF from Clostridium botulinum (strain Okra / Type B1).